The chain runs to 297 residues: MTQSTAQILDGKATAAAIKAELTTRVSVLAAKGIVPGLGTILVGSDPGSTWYVGGKHKDCAEVGIQSIRRDLPEDISQEDLLEVVRELNDNPECTGYIVQLPLPKHIDQDVILEAMDPDKDADGLHPMNLGRLVANVNGEMKSPLPCTPKGCVELLRRHNIELKGKRVLVVGRGVTIGRPIGLLLTRKEVNATVILAHTGTVDLPAELKQADVVIAAAGVPHMIKAEDLKPGAVVLDVGVSRVDDGNGKAVVTGDVDPAAADVAAWLSPNPGGVGPMTRAMLLANVVESAERQAGIA.

Residues 172 to 174, Thr-199, and Val-240 contribute to the NADP(+) site; that span reads GRG.

Belongs to the tetrahydrofolate dehydrogenase/cyclohydrolase family. Homodimer.

It catalyses the reaction (6R)-5,10-methylene-5,6,7,8-tetrahydrofolate + NADP(+) = (6R)-5,10-methenyltetrahydrofolate + NADPH. The enzyme catalyses (6R)-5,10-methenyltetrahydrofolate + H2O = (6R)-10-formyltetrahydrofolate + H(+). It functions in the pathway one-carbon metabolism; tetrahydrofolate interconversion. Catalyzes the oxidation of 5,10-methylenetetrahydrofolate to 5,10-methenyltetrahydrofolate and then the hydrolysis of 5,10-methenyltetrahydrofolate to 10-formyltetrahydrofolate. The sequence is that of Bifunctional protein FolD 2 from Paenarthrobacter aurescens (strain TC1).